The chain runs to 268 residues: Tetratricopeptide repeat protein 33 (268 aa).

A disordered region spans residues 14-34 (VSKQTVQQFEQDSEQADEDEV). Over residues 24–34 (QDSEQADEDEV) the composition is skewed to acidic residues. 3 TPR repeats span residues 60 to 93 (SKRL…TPED), 94 to 127 (AVLY…RPIW), and 128 to 161 (WEAW…HPSE). The disordered stretch occupies residues 249–268 (EGDDNPTSSSQSVLIKARGL).

This Danio rerio (Zebrafish) protein is Tetratricopeptide repeat protein 33 (ttc33).